The primary structure comprises 157 residues: Large ribosomal subunit protein uL11 (157 aa).

It belongs to the universal ribosomal protein uL11 family.

Its function is as follows. This protein binds directly to 26S ribosomal RNA. The chain is Large ribosomal subunit protein uL11 (RPL12) from Chlamydomonas reinhardtii (Chlamydomonas smithii).